We begin with the raw amino-acid sequence, 231 residues long: Flagellar L-ring protein (231 aa).

The N-terminal stretch at Met1 to Gly18 is a signal peptide. Cys19 is lipidated: N-palmitoyl cysteine. Cys19 is lipidated: S-diacylglycerol cysteine. The segment at Leu118 to Ser141 is disordered.

It belongs to the FlgH family. In terms of assembly, the basal body constitutes a major portion of the flagellar organelle and consists of four rings (L,P,S, and M) mounted on a central rod.

The protein resides in the cell outer membrane. It localises to the bacterial flagellum basal body. Functionally, assembles around the rod to form the L-ring and probably protects the motor/basal body from shearing forces during rotation. The polypeptide is Flagellar L-ring protein (Pseudomonas paraeruginosa (strain DSM 24068 / PA7) (Pseudomonas aeruginosa (strain PA7))).